The chain runs to 276 residues: MSLVLAVYGKGGIGKSTTSANISAALALKGAKVLQIGCDPKHDSTFPITGKLQKTVIEALEEVDFHHEELSPEDIVETGFAGIDGLEAGGPPAGSGCGGYVVGESVTLLQEMGVYDKYDVILFDVLGDVVCGGFSAPLNYADYAVIIATNDFDSIFAANRLCMAIQQKSVRYKVQLAGIVANRVDYTKGGGTNMLDQFAEQVGTRLLAKVPYHELIRKSRFAGKTLFAMDPNEPELAECLAPYNEIADQILSEKPIASVPKPIGDREIFDIVGGWQ.

ATP contacts are provided by residues 12-17 (GIGKST) and lysine 41. Serine 16 is a binding site for Mg(2+). [4Fe-4S] cluster contacts are provided by cysteine 97 and cysteine 131. 182-183 (NR) lines the ATP pocket.

The protein belongs to the NifH/BchL/ChlL family. Homodimer. Protochlorophyllide reductase is composed of three subunits; BchL, BchN and BchB. [4Fe-4S] cluster is required as a cofactor.

It catalyses the reaction chlorophyllide a + oxidized 2[4Fe-4S]-[ferredoxin] + 2 ADP + 2 phosphate = protochlorophyllide a + reduced 2[4Fe-4S]-[ferredoxin] + 2 ATP + 2 H2O. It participates in porphyrin-containing compound metabolism; bacteriochlorophyll biosynthesis (light-independent). Component of the dark-operative protochlorophyllide reductase (DPOR) that uses Mg-ATP and reduced ferredoxin to reduce ring D of protochlorophyllide (Pchlide) to form chlorophyllide a (Chlide). This reaction is light-independent. The L component serves as a unique electron donor to the NB-component of the complex, and binds Mg-ATP. The chain is Light-independent protochlorophyllide reductase iron-sulfur ATP-binding protein from Chlorobaculum tepidum (strain ATCC 49652 / DSM 12025 / NBRC 103806 / TLS) (Chlorobium tepidum).